A 321-amino-acid polypeptide reads, in one-letter code: Aspartate carbamoyltransferase catalytic subunit (321 aa).

Carbamoyl phosphate contacts are provided by R65 and T66. K93 lines the L-aspartate pocket. Residues R115, H143, and Q146 each coordinate carbamoyl phosphate. The L-aspartate site is built by R176 and R230. Carbamoyl phosphate is bound by residues G271 and P272.

It belongs to the aspartate/ornithine carbamoyltransferase superfamily. ATCase family. In terms of assembly, heterododecamer (2C3:3R2) of six catalytic PyrB chains organized as two trimers (C3), and six regulatory PyrI chains organized as three dimers (R2).

The catalysed reaction is carbamoyl phosphate + L-aspartate = N-carbamoyl-L-aspartate + phosphate + H(+). The protein operates within pyrimidine metabolism; UMP biosynthesis via de novo pathway; (S)-dihydroorotate from bicarbonate: step 2/3. Its function is as follows. Catalyzes the condensation of carbamoyl phosphate and aspartate to form carbamoyl aspartate and inorganic phosphate, the committed step in the de novo pyrimidine nucleotide biosynthesis pathway. The sequence is that of Aspartate carbamoyltransferase catalytic subunit from Bartonella quintana (strain Toulouse) (Rochalimaea quintana).